The sequence spans 183 residues: Ribonuclease H (183 aa).

An RNase H type-1 domain is found at 2–151 (SQARFIAFSD…VDQLAQAAAR (150 aa)). Residues Asp-11, Glu-57, Asp-79, and Asp-143 each coordinate Mg(2+).

This sequence belongs to the RNase H family. Monomer. Requires Mg(2+) as cofactor.

It is found in the cytoplasm. It carries out the reaction Endonucleolytic cleavage to 5'-phosphomonoester.. Functionally, endonuclease that specifically degrades the RNA of RNA-DNA hybrids. The polypeptide is Ribonuclease H (Anaeromyxobacter dehalogenans (strain 2CP-C)).